Reading from the N-terminus, the 85-residue chain is Beta-toxin BmKAs1 (85 aa).

Positions 1-19 (MKIIIFLIVCSFVLIGVKA) are cleaved as a signal peptide. The LCN-type CS-alpha/beta domain maps to 20 to 82 (DNGYLLNKYT…LWAYETNKCN (63 aa)). 4 disulfide bridges follow: cysteine 31–cysteine 81, cysteine 35–cysteine 56, cysteine 42–cysteine 63, and cysteine 46–cysteine 65.

This sequence belongs to the long (4 C-C) scorpion toxin superfamily. Sodium channel inhibitor family. A possible sulfoxide Met-85 on BmP09 could explain the difference of function between BmK AS-1 and BmP09. In terms of tissue distribution, expressed by the venom gland.

It localises to the secreted. In terms of biological role, beta toxins bind voltage-independently at site-4 of sodium channels (Nav) and shift the voltage of activation toward more negative potentials thereby affecting sodium channel activation and promoting spontaneous and repetitive firing. BmKAs1 also significantly stimulates the binding of [3H]-ryanodine to ryanodine receptors on the sarcoplasmic reticulum of the skeletal muscle. It also displays antinociceptive effect in rat models. Its function is as follows. Toxin BmP09 (which may be post-translationally modified) specifically and reversibly blocks large conductance calcium-dependent and voltage-dependent potassium channels (BK) but has no effect on sodium channels. This Olivierus martensii (Manchurian scorpion) protein is Beta-toxin BmKAs1.